The primary structure comprises 334 residues: Aspartate carbamoyltransferase catalytic subunit (334 aa).

The carbamoyl phosphate site is built by arginine 71 and threonine 72. Lysine 99 serves as a coordination point for L-aspartate. Residues arginine 121, histidine 151, and glutamine 154 each contribute to the carbamoyl phosphate site. Positions 184 and 239 each coordinate L-aspartate. Carbamoyl phosphate-binding residues include glycine 280 and proline 281.

It belongs to the aspartate/ornithine carbamoyltransferase superfamily. ATCase family. Heterododecamer (2C3:3R2) of six catalytic PyrB chains organized as two trimers (C3), and six regulatory PyrI chains organized as three dimers (R2).

It catalyses the reaction carbamoyl phosphate + L-aspartate = N-carbamoyl-L-aspartate + phosphate + H(+). It participates in pyrimidine metabolism; UMP biosynthesis via de novo pathway; (S)-dihydroorotate from bicarbonate: step 2/3. Functionally, catalyzes the condensation of carbamoyl phosphate and aspartate to form carbamoyl aspartate and inorganic phosphate, the committed step in the de novo pyrimidine nucleotide biosynthesis pathway. The sequence is that of Aspartate carbamoyltransferase catalytic subunit from Pseudomonas putida (strain GB-1).